The primary structure comprises 1039 residues: FHIP family protein GG24907 (1039 aa).

Phosphoserine occurs at positions 498 and 805. Disordered stretches follow at residues 831-877 (ATPT…SASS), 904-945 (GISQ…SNSS), and 957-984 (SNTT…SEPA). Polar residues-rich tracts occupy residues 855-877 (TSMF…SASS) and 904-924 (GISQ…TQPQ). The segment covering 925 to 945 (AGASRTGATATSAAASGSNSS) has biased composition (low complexity). Residues 957-966 (SNTTTHSAST) show a composition bias toward polar residues.

The protein belongs to the FHIP family.

This chain is FHIP family protein GG24907, found in Drosophila erecta (Fruit fly).